We begin with the raw amino-acid sequence, 108 residues long: uncharacterized protein (108 aa).

The tract at residues 1–23 is disordered; the sequence is MVDELEKNQVQPQETEENKENAL.

This is an uncharacterized protein from Ureaplasma parvum serovar 3 (strain ATCC 700970).